A 633-amino-acid chain; its full sequence is 1-deoxy-D-xylulose-5-phosphate synthase (633 aa).

Residues H74 and 115–117 each bind thiamine diphosphate; that span reads GHA. Position 146 (D146) interacts with Mg(2+). Residues 147-148, N175, Y286, and E363 each bind thiamine diphosphate; that span reads GA. Mg(2+) is bound at residue N175.

This sequence belongs to the transketolase family. DXPS subfamily. In terms of assembly, homodimer. It depends on Mg(2+) as a cofactor. Requires thiamine diphosphate as cofactor.

It catalyses the reaction D-glyceraldehyde 3-phosphate + pyruvate + H(+) = 1-deoxy-D-xylulose 5-phosphate + CO2. It participates in metabolic intermediate biosynthesis; 1-deoxy-D-xylulose 5-phosphate biosynthesis; 1-deoxy-D-xylulose 5-phosphate from D-glyceraldehyde 3-phosphate and pyruvate: step 1/1. Catalyzes the acyloin condensation reaction between C atoms 2 and 3 of pyruvate and glyceraldehyde 3-phosphate to yield 1-deoxy-D-xylulose-5-phosphate (DXP). The polypeptide is 1-deoxy-D-xylulose-5-phosphate synthase (Dehalococcoides mccartyi (strain ATCC BAA-2100 / JCM 16839 / KCTC 5957 / BAV1)).